Reading from the N-terminus, the 576-residue chain is Pentatricopeptide repeat-containing protein At1g79080, chloroplastic (576 aa).

A chloroplast-targeting transit peptide spans 1–37; sequence MSTLLNSVLSMASPESSPRKAVGFVSHIPSGFLHFSS. PPR repeat units follow at residues 105 to 139, 140 to 174, 175 to 209, 210 to 244, 245 to 279, 280 to 314, 315 to 349, 352 to 386, 387 to 417, 422 to 456, 457 to 487, 493 to 527, and 528 to 562; these read NVAH…GIIP, DASA…GYPS, NTVT…GLAP, NAFT…GGEP, NLVS…GFKA, NVVS…DRAP, SVVT…NHQF, TATS…RCKP, NEGT…LSNK, THDF…GFDP, DAHT…MEES, TVDN…KRMP, and NETT…KVIG.

The protein belongs to the PPR family. P subfamily.

Its subcellular location is the plastid. It localises to the chloroplast. In Arabidopsis thaliana (Mouse-ear cress), this protein is Pentatricopeptide repeat-containing protein At1g79080, chloroplastic.